Here is a 383-residue protein sequence, read N- to C-terminus: Acetylornithine deacetylase (383 aa).

Zn(2+) is bound at residue histidine 80. The active site involves aspartate 82. Aspartate 112 is a binding site for Zn(2+). The active site involves glutamate 144. Glutamate 145, glutamate 169, and histidine 355 together coordinate Zn(2+).

This sequence belongs to the peptidase M20A family. ArgE subfamily. Homodimer. It depends on Zn(2+) as a cofactor. The cofactor is Co(2+). Glutathione serves as cofactor.

It localises to the cytoplasm. The catalysed reaction is N(2)-acetyl-L-ornithine + H2O = L-ornithine + acetate. The protein operates within amino-acid biosynthesis; L-arginine biosynthesis; L-ornithine from N(2)-acetyl-L-ornithine (linear): step 1/1. Catalyzes the hydrolysis of the amide bond of N(2)-acetylated L-amino acids. Cleaves the acetyl group from N-acetyl-L-ornithine to form L-ornithine, an intermediate in L-arginine biosynthesis pathway, and a branchpoint in the synthesis of polyamines. This Escherichia coli O127:H6 (strain E2348/69 / EPEC) protein is Acetylornithine deacetylase.